Consider the following 633-residue polypeptide: 1-deoxy-D-xylulose-5-phosphate synthase (633 aa).

Residues 1-22 (MPTTFHEIPRKRPTTPLLDRAQ) form a disordered region. Residues H87 and 128 to 130 (GHS) each bind thiamine diphosphate. D159 contacts Mg(2+). Thiamine diphosphate-binding positions include 160–161 (GA), N188, F295, and E378. Residue N188 coordinates Mg(2+).

It belongs to the transketolase family. DXPS subfamily. Homodimer. Mg(2+) is required as a cofactor. Requires thiamine diphosphate as cofactor.

The enzyme catalyses D-glyceraldehyde 3-phosphate + pyruvate + H(+) = 1-deoxy-D-xylulose 5-phosphate + CO2. It participates in metabolic intermediate biosynthesis; 1-deoxy-D-xylulose 5-phosphate biosynthesis; 1-deoxy-D-xylulose 5-phosphate from D-glyceraldehyde 3-phosphate and pyruvate: step 1/1. Functionally, catalyzes the acyloin condensation reaction between C atoms 2 and 3 of pyruvate and glyceraldehyde 3-phosphate to yield 1-deoxy-D-xylulose-5-phosphate (DXP). The sequence is that of 1-deoxy-D-xylulose-5-phosphate synthase from Pseudomonas fluorescens (strain ATCC BAA-477 / NRRL B-23932 / Pf-5).